Here is a 241-residue protein sequence, read N- to C-terminus: Small ribosomal subunit protein uS3 (241 aa).

One can recognise a KH type-2 domain in the interval 39–109 (IRQYITKNLS…QIRINVIEVQ (71 aa)). The disordered stretch occupies residues 214-241 (EEIPMPVPSQTPRRQRRRQQFEDRSGEE). Residues 232–241 (QQFEDRSGEE) are compositionally biased toward basic and acidic residues.

This sequence belongs to the universal ribosomal protein uS3 family. As to quaternary structure, part of the 30S ribosomal subunit. Forms a tight complex with proteins S10 and S14.

Its function is as follows. Binds the lower part of the 30S subunit head. Binds mRNA in the 70S ribosome, positioning it for translation. This Rippkaea orientalis (strain PCC 8801 / RF-1) (Cyanothece sp. (strain PCC 8801)) protein is Small ribosomal subunit protein uS3.